We begin with the raw amino-acid sequence, 351 residues long: Probable cobalt-factor III C(17)-methyltransferase (351 aa).

The protein belongs to the precorrin methyltransferase family.

The catalysed reaction is Co(II)-factor III + S-adenosyl-L-methionine + H(+) = Co(II)-factor IV + S-adenosyl-L-homocysteine. It participates in cofactor biosynthesis; adenosylcobalamin biosynthesis; cob(II)yrinate a,c-diamide from sirohydrochlorin (anaerobic route): step 3/10. In terms of biological role, methyltransferase that likely catalyzes the ring contraction and methylation of C-17 in cobalt-factor III to form cobalt-factor IV. May also convert cobalt-precorrin-3 to cobalt-precorrin-4. This Methanothermobacter thermautotrophicus (strain ATCC 29096 / DSM 1053 / JCM 10044 / NBRC 100330 / Delta H) (Methanobacterium thermoautotrophicum) protein is Probable cobalt-factor III C(17)-methyltransferase (cbiH).